The sequence spans 565 residues: Sulfite reductase [NADPH] hemoprotein beta-component (565 aa).

Residues Cys429, Cys435, Cys474, and Cys478 each coordinate [4Fe-4S] cluster. Cys478 is a siroheme binding site.

Belongs to the nitrite and sulfite reductase 4Fe-4S domain family. In terms of assembly, alpha(8)-beta(8). The alpha component is a flavoprotein, the beta component is a hemoprotein. It depends on siroheme as a cofactor. [4Fe-4S] cluster serves as cofactor.

It carries out the reaction hydrogen sulfide + 3 NADP(+) + 3 H2O = sulfite + 3 NADPH + 4 H(+). The protein operates within sulfur metabolism; hydrogen sulfide biosynthesis; hydrogen sulfide from sulfite (NADPH route): step 1/1. Component of the sulfite reductase complex that catalyzes the 6-electron reduction of sulfite to sulfide. This is one of several activities required for the biosynthesis of L-cysteine from sulfate. This Shewanella baltica (strain OS223) protein is Sulfite reductase [NADPH] hemoprotein beta-component.